Reading from the N-terminus, the 275-residue chain is Biotin synthase (275 aa).

The region spanning 1–217 is the Radical SAM core domain; it reads MLCAICNVSS…DTAKTLPQCR (217 aa). Residues C13, C17, and C20 each coordinate [4Fe-4S] cluster. [2Fe-2S] cluster-binding residues include C57, C92, C150, and R217.

The protein belongs to the radical SAM superfamily. Biotin synthase family. As to quaternary structure, homodimer. [4Fe-4S] cluster serves as cofactor. It depends on [2Fe-2S] cluster as a cofactor.

It catalyses the reaction (4R,5S)-dethiobiotin + (sulfur carrier)-SH + 2 reduced [2Fe-2S]-[ferredoxin] + 2 S-adenosyl-L-methionine = (sulfur carrier)-H + biotin + 2 5'-deoxyadenosine + 2 L-methionine + 2 oxidized [2Fe-2S]-[ferredoxin]. The protein operates within cofactor biosynthesis; biotin biosynthesis; biotin from 7,8-diaminononanoate: step 2/2. Functionally, catalyzes the conversion of dethiobiotin (DTB) to biotin by the insertion of a sulfur atom into dethiobiotin via a radical-based mechanism. The polypeptide is Biotin synthase (Campylobacter fetus subsp. fetus (strain 82-40)).